The following is a 205-amino-acid chain: Ephrin-A1 (205 aa).

An N-terminal signal peptide occupies residues 1–17; that stretch reads MEFLWAPLLGLCCSLAA. The 134-residue stretch at 18–151 folds into the Ephrin RBD domain; the sequence is ADRHIVFWNS…KLKVTVNGKI (134 aa). N-linked (GlcNAc...) asparagine glycosylation is present at Asn26. Cystine bridges form between Cys51/Cys92 and Cys80/Cys140. The GPI-anchor amidated serine moiety is linked to residue Ser182. Residues 183–205 constitute a propeptide, removed in mature form; that stretch reads AAPRLFPLVWAVLLLPLLLLQTQ.

This sequence belongs to the ephrin family. As to quaternary structure, monomer. Homodimer. Forms heterodimers with EPHA2. Binds to the receptor tyrosine kinases EPHA2, EPHA3, EPHA4, EPHA5, EPHA6 and EPHA7. Also binds with low affinity to EPHA1. Post-translationally, undergoes proteolysis by a metalloprotease to give rise to a soluble monomeric form. In terms of processing, N-Glycosylation is required for binding to EPHA2 receptor and inducing its internalization.

The protein resides in the cell membrane. It is found in the secreted. Its function is as follows. Cell surface GPI-bound ligand for Eph receptors, a family of receptor tyrosine kinases which are crucial for migration, repulsion and adhesion during neuronal, vascular and epithelial development. Binds promiscuously Eph receptors residing on adjacent cells, leading to contact-dependent bidirectional signaling into neighboring cells. Plays an important role in angiogenesis and tumor neovascularization. The recruitment of VAV2, VAV3 and PI3-kinase p85 subunit by phosphorylated EPHA2 is critical for EFNA1-induced RAC1 GTPase activation and vascular endothelial cell migration and assembly. Exerts anti-oncogenic effects in tumor cells through activation and down-regulation of EPHA2. Activates EPHA2 by inducing tyrosine phosphorylation which leads to its internalization and degradation. Acts as a negative regulator in the tumorigenesis of gliomas by down-regulating EPHA2 and FAK. Can evoke collapse of embryonic neuronal growth cone and regulates dendritic spine morphogenesis. The chain is Ephrin-A1 (Efna1) from Rattus norvegicus (Rat).